Reading from the N-terminus, the 309-residue chain is uncharacterized protein (309 aa).

Residues 11 to 87 (QRLDTFLATL…FPLDILYEDE (77 aa)) enclose the S4 RNA-binding domain. Residue Asp131 is part of the active site.

Belongs to the pseudouridine synthase RluA family.

It catalyses the reaction a uridine in RNA = a pseudouridine in RNA. This is an uncharacterized protein from Mycoplasma pneumoniae (strain ATCC 29342 / M129 / Subtype 1) (Mycoplasmoides pneumoniae).